The chain runs to 199 residues: Pre-histone-like nucleoprotein (199 aa).

Ser-2 is modified (N-acetylserine; by host). Residues 2–23 (SILISPSDNTGWGLGTGKMYGG) constitute a propeptide that is removed on maturation. At Lys-26 the chain carries N6-acetyllysine; by host. The Nuclear localization signal signature appears at 189–199 (RRKASVRRRRT).

This sequence belongs to the adenoviridae histone-like nucleoprotein family. In terms of assembly, interacts with the core-capsid bridging protein; this interaction bridges the virus core to the capsid. Interacts with host NPM1; this interaction might play a role in placing the pre-histone-like nucleoprotein on the viral DNA or regulating viral gene expression. Interacts with host HMGB1; this interaction inhibits host immune response. Cleaved near the N-terminus by the viral protease during virion maturation to form the mature protein.

The protein localises to the virion. The protein resides in the host nucleus. It is found in the host nucleolus. Plays a role in the inhibition of host immune response within the nucleus. Interacts with cellular nucleosomes and immobilizes the host immune danger signal HMGB1 on chromatin. In turn, prevents HMGB1 release out of the cell and thus decreases inflammation. Also plays a role in the wrapping and condensation of the viral DNA. May also promote viral genome import into the nucleus. In Murine adenovirus A serotype 1 (MAdV-1), this protein is Pre-histone-like nucleoprotein.